The primary structure comprises 110 residues: HTH-type transcriptional regulator TnrA (110 aa).

Positions 13-81 (VISIGIVSEL…TAEILKDMRK (69 aa)) constitute an HTH merR-type domain. Residues 16-35 (IGIVSELTGLSVRQIRYYEE) constitute a DNA-binding region (H-T-H motif).

In terms of assembly, homodimer. Under conditions of nitrogen excess, TnrA forms a stable complex with feedback-inhibited GlnA. Interacts with GlnK-AmtB complex.

It localises to the cell membrane. Under conditions of nitrogen excess, the DNA-binding activity is inhibited by the formation of a stable complex with feedback-inhibited GlnA. The presence of glutamine and AMP increases the inhibitory activity of glutamine synthetase by more than 1000-fold. Functionally, transcription regulator that actives the transcription of genes required for nitrogen assimilation such as nrgAB (ammonium transport), nasABCDEF (nitrate/nitrite assimilation), ureABC (urea degradation) and gabP (GABA transport), during nitrogen limitation. Also represses glnRA and gltAB in the absence of ammonium. On the contrary of the MerR members, which require longer DNA sites for high-affinity binding, TnrA requires a DNA sequence of 17 nucleotides as minimal binding site. The sequence is that of HTH-type transcriptional regulator TnrA from Bacillus subtilis (strain 168).